Reading from the N-terminus, the 290-residue chain is MSAVAPRSRLSLYLDLIRWNRPAGWLVLVWPTLAALWVAADGFPGWHLLAVFVAGTVLMRSAGCTINDIADRDFDRHVKRTTQRPITSGQLGVREAALVGVVLTLVAFVLVLTTRWEAVAWSVPAVLFTILYPFTKRFFAMPQAFLGIAFNFGIVIAFAAVQGRVPATAWVLWLANLFLVLAYDTEYAMVDRDDDLKIGMKTSAITLGRFDVAAIMGFFVLCLGLTAWVLAPYGLGWPLWLGLGVAAAQVAWHFTLIKDRTREGCFTAFSKSHWIGAAIFAGVALGYLLR.

Helical transmembrane passes span 33–53, 91–111, 116–136, 138–158, 165–185, 212–232, 237–257, and 269–289; these read LAAL…AVFV, LGVR…FVLV, WEAV…PFTK, FFAM…VIAF, VPAT…AYDT, VAAI…VLAP, WPLW…FTLI, and FSKS…GYLL.

The protein belongs to the UbiA prenyltransferase family. It depends on Mg(2+) as a cofactor.

The protein localises to the cell inner membrane. The enzyme catalyses all-trans-octaprenyl diphosphate + 4-hydroxybenzoate = 4-hydroxy-3-(all-trans-octaprenyl)benzoate + diphosphate. It functions in the pathway cofactor biosynthesis; ubiquinone biosynthesis. Its function is as follows. Catalyzes the prenylation of para-hydroxybenzoate (PHB) with an all-trans polyprenyl group. Mediates the second step in the final reaction sequence of ubiquinone-8 (UQ-8) biosynthesis, which is the condensation of the polyisoprenoid side chain with PHB, generating the first membrane-bound Q intermediate 3-octaprenyl-4-hydroxybenzoate. The chain is 4-hydroxybenzoate octaprenyltransferase from Acidovorax ebreus (strain TPSY) (Diaphorobacter sp. (strain TPSY)).